Reading from the N-terminus, the 581-residue chain is Semenogelin-2 (581 aa).

An N-terminal signal peptide occupies residues 1-23 (MKSIILFVLSLLLILEKQAAVMG). 4 disordered regions span residues 24-62 (QKGG…SKGS), 132-157 (GGKA…GISS), 173-194 (KEQA…QSSY), and 271-581 (NLNQ…PIST). Composition is skewed to polar residues over residues 138-157 (GTQN…GISS) and 174-194 (EQAS…QSSY). Over residues 291–310 (HTEERQLNHGEKSVQKDISK) the composition is skewed to basic and acidic residues. The span at 324 to 333 (KSQNQVTIHS) shows a compositional bias: polar residues. The span at 334–344 (QDQEHGHKENK) shows a compositional bias: basic and acidic residues. A compositionally biased stretch (polar residues) spans 366–396 (KSVSKGSISIQTEEQIHGKSQNQVRIPSQAQ). 2 stretches are compositionally biased toward basic and acidic residues: residues 412 to 425 (TEER…KDIQ) and 455 to 464 (DQEHGHKENK). 2 stretches are compositionally biased toward polar residues: residues 481-497 (GKNT…SFQT) and 505-529 (SQIQ…SGQS). Basic and acidic residues-rich tracts occupy residues 530 to 545 (ADRE…KGRY) and 558 to 581 (TEHE…PIST).

Belongs to the semenogelin family. As to quaternary structure, interacts with SERPINA5.

The protein localises to the secreted. Participates in the formation of a gel matrix (sperm coagulum) entrapping the accessory gland secretions and ejaculated spermatozoa. This chain is Semenogelin-2 (SEMG2), found in Pongo abelii (Sumatran orangutan).